Reading from the N-terminus, the 295-residue chain is Pyridoxal 5'-phosphate synthase subunit PdxS (295 aa).

D-ribose 5-phosphate is bound at residue Asp-25. Catalysis depends on Lys-82, which acts as the Schiff-base intermediate with D-ribose 5-phosphate. Gly-154 lines the D-ribose 5-phosphate pocket. Position 166 (Arg-166) interacts with D-glyceraldehyde 3-phosphate. D-ribose 5-phosphate is bound by residues Gly-215 and 236-237; that span reads GS.

This sequence belongs to the PdxS/SNZ family. In the presence of PdxT, forms a dodecamer of heterodimers.

It carries out the reaction aldehydo-D-ribose 5-phosphate + D-glyceraldehyde 3-phosphate + L-glutamine = pyridoxal 5'-phosphate + L-glutamate + phosphate + 3 H2O + H(+). Its pathway is cofactor biosynthesis; pyridoxal 5'-phosphate biosynthesis. Functionally, catalyzes the formation of pyridoxal 5'-phosphate from ribose 5-phosphate (RBP), glyceraldehyde 3-phosphate (G3P) and ammonia. The ammonia is provided by the PdxT subunit. Can also use ribulose 5-phosphate and dihydroxyacetone phosphate as substrates, resulting from enzyme-catalyzed isomerization of RBP and G3P, respectively. This chain is Pyridoxal 5'-phosphate synthase subunit PdxS, found in Staphylococcus epidermidis (strain ATCC 35984 / DSM 28319 / BCRC 17069 / CCUG 31568 / BM 3577 / RP62A).